A 488-amino-acid polypeptide reads, in one-letter code: Mannosylglycerate hydrolase MGH2 (488 aa).

Residues Y94, 98-101 (WNWD), Y146, Q167, and G227 each bind substrate. D229 (proton donor) is an active-site residue. Substrate-binding positions include R262 and 415-416 (YW). Catalysis depends on E459, which acts as the Proton acceptor.

Belongs to the glycosyl hydrolase 63 family.

It carries out the reaction (2R)-2-O-(alpha-D-mannosyl)-glycerate + H2O = D-mannose + (R)-glycerate. The catalysed reaction is (2R)-2-O-(alpha-D-glucopyranosyl)-glycerate + H2O = (R)-glycerate + D-glucose. With respect to regulation, activity is not dependent on divalent cations, but it is enhanced by Mn(2+). Catalyzes the hydrolysis of alpha-D-mannosyl-glycerate (MG) to D-glycerate and D-mannose. Can also hydrolyze alpha-D-glucopyranosyl-glycerate (GG)with lower efficiency. The sequence is that of Mannosylglycerate hydrolase MGH2 from Selaginella moellendorffii (Spikemoss).